The primary structure comprises 279 residues: Putative pyruvate, phosphate dikinase regulatory protein (279 aa).

Residue 152–159 (GVSRTSKS) participates in ADP binding.

This sequence belongs to the pyruvate, phosphate/water dikinase regulatory protein family. PDRP subfamily.

It carries out the reaction N(tele)-phospho-L-histidyl/L-threonyl-[pyruvate, phosphate dikinase] + ADP = N(tele)-phospho-L-histidyl/O-phospho-L-threonyl-[pyruvate, phosphate dikinase] + AMP + H(+). The enzyme catalyses N(tele)-phospho-L-histidyl/O-phospho-L-threonyl-[pyruvate, phosphate dikinase] + phosphate + H(+) = N(tele)-phospho-L-histidyl/L-threonyl-[pyruvate, phosphate dikinase] + diphosphate. Functionally, bifunctional serine/threonine kinase and phosphorylase involved in the regulation of the pyruvate, phosphate dikinase (PPDK) by catalyzing its phosphorylation/dephosphorylation. This is Putative pyruvate, phosphate dikinase regulatory protein from Anaplasma marginale (strain St. Maries).